A 406-amino-acid chain; its full sequence is Dual-specificity RNA methyltransferase RlmN (406 aa).

The active-site Proton acceptor is Glu119. A Radical SAM core domain is found at 125 to 370; that stretch reads DKGRGTLCVS…AMVRRTRGDD (246 aa). Cys132 and Cys375 are joined by a disulfide. [4Fe-4S] cluster-binding residues include Cys139, Cys143, and Cys146. S-adenosyl-L-methionine-binding positions include 192-193, Ser224, 246-248, and Asn332; these read GE and SLH. The S-methylcysteine intermediate role is filled by Cys375.

Belongs to the radical SAM superfamily. RlmN family. Requires [4Fe-4S] cluster as cofactor.

It is found in the cytoplasm. It catalyses the reaction adenosine(2503) in 23S rRNA + 2 reduced [2Fe-2S]-[ferredoxin] + 2 S-adenosyl-L-methionine = 2-methyladenosine(2503) in 23S rRNA + 5'-deoxyadenosine + L-methionine + 2 oxidized [2Fe-2S]-[ferredoxin] + S-adenosyl-L-homocysteine. It carries out the reaction adenosine(37) in tRNA + 2 reduced [2Fe-2S]-[ferredoxin] + 2 S-adenosyl-L-methionine = 2-methyladenosine(37) in tRNA + 5'-deoxyadenosine + L-methionine + 2 oxidized [2Fe-2S]-[ferredoxin] + S-adenosyl-L-homocysteine. Specifically methylates position 2 of adenine 2503 in 23S rRNA and position 2 of adenine 37 in tRNAs. m2A2503 modification seems to play a crucial role in the proofreading step occurring at the peptidyl transferase center and thus would serve to optimize ribosomal fidelity. The chain is Dual-specificity RNA methyltransferase RlmN from Xylella fastidiosa (strain Temecula1 / ATCC 700964).